Reading from the N-terminus, the 152-residue chain is Nucleoside diphosphate kinase (152 aa).

Lysine 11, phenylalanine 59, arginine 87, threonine 93, arginine 104, and asparagine 114 together coordinate ATP. The active-site Pros-phosphohistidine intermediate is the histidine 117.

This sequence belongs to the NDK family. As to quaternary structure, homotetramer. Mg(2+) is required as a cofactor.

The protein resides in the cytoplasm. It carries out the reaction a 2'-deoxyribonucleoside 5'-diphosphate + ATP = a 2'-deoxyribonucleoside 5'-triphosphate + ADP. The enzyme catalyses a ribonucleoside 5'-diphosphate + ATP = a ribonucleoside 5'-triphosphate + ADP. In terms of biological role, major role in the synthesis of nucleoside triphosphates other than ATP. The ATP gamma phosphate is transferred to the NDP beta phosphate via a ping-pong mechanism, using a phosphorylated active-site intermediate. The protein is Nucleoside diphosphate kinase of Prochlorococcus marinus (strain MIT 9301).